The primary structure comprises 393 residues: 2-methylcitrate synthase (393 aa).

Residues Arg92 and His207 each contribute to the substrate site. The active site involves His242. 275–279 lines the CoA pocket; the sequence is KIMGF. His281 is an active-site residue. Residue Arg290 participates in substrate binding. Asp332 is an active-site residue. The substrate site is built by Arg357 and Arg376.

The protein belongs to the citrate synthase family. In terms of assembly, homodimer.

It carries out the reaction propanoyl-CoA + oxaloacetate + H2O = (2S,3S)-2-methylcitrate + CoA + H(+). The enzyme catalyses oxaloacetate + acetyl-CoA + H2O = citrate + CoA + H(+). It functions in the pathway organic acid metabolism; propanoate degradation. The protein operates within carbohydrate metabolism; tricarboxylic acid cycle; isocitrate from oxaloacetate: step 1/2. In terms of biological role, involved in the catabolism of short chain fatty acids (SCFA) via the tricarboxylic acid (TCA)(acetyl degradation route) and via the 2-methylcitrate cycle I (propionate degradation route). Catalyzes the Claisen condensation of propionyl-CoA and oxaloacetate (OAA) to yield 2-methylcitrate (2-MC) and CoA. Also catalyzes the condensation of oxaloacetate with acetyl-CoA. The chain is 2-methylcitrate synthase (gltA1) from Mycobacterium tuberculosis (strain ATCC 35801 / TMC 107 / Erdman).